A 286-amino-acid chain; its full sequence is Nucleotide-binding protein VC_2532 (286 aa).

8–15 (GQSGAGKS) contributes to the ATP binding site. A GTP-binding site is contributed by 56–59 (DIRN).

Belongs to the RapZ-like family.

Its function is as follows. Displays ATPase and GTPase activities. This chain is Nucleotide-binding protein VC_2532, found in Vibrio cholerae serotype O1 (strain ATCC 39315 / El Tor Inaba N16961).